A 404-amino-acid chain; its full sequence is 1-deoxy-D-xylulose 5-phosphate reductoisomerase (404 aa).

Thr-5, Gly-6, Ser-7, Ile-8, Gly-31, Arg-32, Asn-33, and Asn-121 together coordinate NADPH. Lys-122 provides a ligand contact to 1-deoxy-D-xylulose 5-phosphate. Residue Glu-123 participates in NADPH binding. Residue Asp-147 participates in Mn(2+) binding. Positions 148, 149, 185, and 208 each coordinate 1-deoxy-D-xylulose 5-phosphate. Glu-149 is a binding site for Mn(2+). Residue Gly-214 coordinates NADPH. The 1-deoxy-D-xylulose 5-phosphate site is built by Ser-221, Asn-226, Lys-227, and Glu-230. Glu-230 contacts Mn(2+).

This sequence belongs to the DXR family. It depends on Mg(2+) as a cofactor. Requires Mn(2+) as cofactor.

It catalyses the reaction 2-C-methyl-D-erythritol 4-phosphate + NADP(+) = 1-deoxy-D-xylulose 5-phosphate + NADPH + H(+). It participates in isoprenoid biosynthesis; isopentenyl diphosphate biosynthesis via DXP pathway; isopentenyl diphosphate from 1-deoxy-D-xylulose 5-phosphate: step 1/6. Catalyzes the NADPH-dependent rearrangement and reduction of 1-deoxy-D-xylulose-5-phosphate (DXP) to 2-C-methyl-D-erythritol 4-phosphate (MEP). This Prochlorococcus marinus subsp. pastoris (strain CCMP1986 / NIES-2087 / MED4) protein is 1-deoxy-D-xylulose 5-phosphate reductoisomerase.